Here is a 364-residue protein sequence, read N- to C-terminus: MQERHTEQDYRALLIADTPIIDVRAPIEFEQGAMPAAINLPLMNNDERAAVGICYKQQGSDAALALGHKLVAGEIRQQRMDAWRAACLQNPHGILCCARGGQRSHIVQRWLHDAGIDYPLVEGGYKALRQTAIQATIELSQKPIVLIGGCTGCGKTLLVQQQPNGVDLEGLARHRGSAFGRTLQPQLSQASFENLLAAEMLKTDARQNLRLWVLEDESRMIGSNHLPECLRERMTQATIAVVEDPFEIRLERLNEEYFLRMHHDFTHAYGDEQGWQEYCEYLHHGLSAIKRRLGLQRYNELAARLDAALTTQLTTGSTDGHLAWLVPLLEEYYDPMYRYQLEKKAEKVVFRGEWAEVAEWVKAQ.

Positions 14–137 (LIADTPIIDV…LRQTAIQATI (124 aa)) constitute a Rhodanese domain. Cys97 serves as the catalytic S-selanylcysteine intermediate.

Belongs to the SelU family. Monomer.

It catalyses the reaction 5-methylaminomethyl-2-thiouridine(34) in tRNA + selenophosphate + (2E)-geranyl diphosphate + H2O + H(+) = 5-methylaminomethyl-2-selenouridine(34) in tRNA + (2E)-thiogeraniol + phosphate + diphosphate. It carries out the reaction 5-methylaminomethyl-2-thiouridine(34) in tRNA + (2E)-geranyl diphosphate = 5-methylaminomethyl-S-(2E)-geranyl-thiouridine(34) in tRNA + diphosphate. The catalysed reaction is 5-methylaminomethyl-S-(2E)-geranyl-thiouridine(34) in tRNA + selenophosphate + H(+) = 5-methylaminomethyl-2-(Se-phospho)selenouridine(34) in tRNA + (2E)-thiogeraniol. The enzyme catalyses 5-methylaminomethyl-2-(Se-phospho)selenouridine(34) in tRNA + H2O = 5-methylaminomethyl-2-selenouridine(34) in tRNA + phosphate. Its function is as follows. Involved in the post-transcriptional modification of the uridine at the wobble position (U34) of tRNA(Lys), tRNA(Glu) and tRNA(Gln). Catalyzes the conversion of 2-thiouridine (S2U-RNA) to 2-selenouridine (Se2U-RNA). Acts in a two-step process involving geranylation of 2-thiouridine (S2U) to S-geranyl-2-thiouridine (geS2U) and subsequent selenation of the latter derivative to 2-selenouridine (Se2U) in the tRNA chain. This is tRNA 2-selenouridine synthase from Escherichia coli O45:K1 (strain S88 / ExPEC).